A 622-amino-acid polypeptide reads, in one-letter code: Cilia- and flagella-associated protein 206 (622 aa).

Belongs to the CFAP206 family.

The protein localises to the cytoplasm. The protein resides in the cytoskeleton. Its subcellular location is the cilium axoneme. It localises to the cilium basal body. In terms of biological role, essential for sperm motility and is involved in the regulation of the beating frequency of motile cilia on the epithelial cells of the respiratory tract. Required for the establishment of radial spokes in sperm flagella. This Rattus norvegicus (Rat) protein is Cilia- and flagella-associated protein 206.